The following is an 87-amino-acid chain: U3-theraphotoxin-Hhn1j (87 aa).

A signal peptide spans 1–24; that stretch reads MVNMKASMFLTFAGLVLLFVVCYA. The propeptide occupies 25–52; that stretch reads SESEEKEFPKEMLSSIFAVDNDFKQEER. Cystine bridges form between cysteine 54/cysteine 67, cysteine 61/cysteine 72, and cysteine 66/cysteine 79.

It belongs to the neurotoxin 10 (Hwtx-1) family. 51 (Hntx-8) subfamily. Hntx-8 sub-subfamily. In terms of tissue distribution, expressed by the venom gland.

Its subcellular location is the secreted. Functionally, ion channel inhibitor. In Cyriopagopus hainanus (Chinese bird spider), this protein is U3-theraphotoxin-Hhn1j.